Here is a 229-residue protein sequence, read N- to C-terminus: Cytidylate kinase (229 aa).

12-20 (GPSGSGKGT) lines the ATP pocket.

The protein belongs to the cytidylate kinase family. Type 1 subfamily.

It is found in the cytoplasm. It catalyses the reaction CMP + ATP = CDP + ADP. The enzyme catalyses dCMP + ATP = dCDP + ADP. The sequence is that of Cytidylate kinase from Pseudomonas fluorescens (strain ATCC BAA-477 / NRRL B-23932 / Pf-5).